Here is a 1122-residue protein sequence, read N- to C-terminus: Angiopoietin-1 receptor (1122 aa).

Positions 1–22 (MDSLAGLVLCGVSLLLYGVVEG) are cleaved as a signal peptide. Residues 23-746 (AMDLILINSL…SADLGGGKML (724 aa)) lie on the Extracellular side of the membrane. An intrachain disulfide couples Cys44 to Cys102. One can recognise an Ig-like C2-type 1 domain in the interval 44 to 123 (CIASGWHPHE…RTMKMRQQAS (80 aa)). Asn140 and Asn158 each carry an N-linked (GlcNAc...) asparagine glycan. EGF-like domains lie at 210–252 (RCEA…RTCE), 254–299 (ACEP…LQCN), and 301–341 (ACPS…LQCE). 13 cysteine pairs are disulfide-bonded: Cys211–Cys220, Cys224–Cys233, Cys227–Cys240, Cys242–Cys251, Cys255–Cys264, Cys268–Cys274, Cys280–Cys287, Cys289–Cys298, Cys302–Cys311, Cys315–Cys323, Cys317–Cys329, Cys331–Cys340, and Cys370–Cys424. One can recognise an Ig-like C2-type 2 domain in the interval 350–440 (PQIEDLPDHI…GMVEKPFNIS (91 aa)). Residues Asn399, Asn438, Asn464, Asn558, Asn595, Asn648, and Asn690 are each glycosylated (N-linked (GlcNAc...) asparagine). Fibronectin type-III domains lie at 444–539 (LPEP…TASI), 543–635 (PPRG…TLSD), and 640–733 (QPEN…TLPH). The chain crosses the membrane as a helical span at residues 747 to 767 (LIAILGSAGMTCITVLLAFLI). Residues 768–1122 (MLQLKRANVQ…GIDCSAEEAA (355 aa)) lie on the Cytoplasmic side of the membrane. Residues 822–1094 (IKFQDVIGEG…QILVSLNRML (273 aa)) enclose the Protein kinase domain. ATP contacts are provided by residues 828-836 (IGEGNFGQV) and Lys853. Phosphotyrosine; by autocatalysis is present on Tyr858. Residue Asp962 is the Proton acceptor of the active site. Residues Tyr990, Tyr1100, and Tyr1106 each carry the phosphotyrosine; by autocatalysis modification.

This sequence belongs to the protein kinase superfamily. Tyr protein kinase family. Tie subfamily. Homodimer. Heterodimer with TIE1. Interacts with ANGPT1, ANGPT2 and ANGPT4. At cell-cell contacts in quiescent cells, forms a signaling complex composed of ANGPT1 plus TEK molecules from two adjoining cells. In the absence of endothelial cell-cell contacts, interaction with ANGPT1 mediates contacts with the extracellular matrix. Interacts (tyrosine phosphorylated) with TNIP2. Interacts (tyrosine phosphorylated) with SHC1 (via SH2 domain). Interacts with PTPRB; this promotes endothelial cell-cell adhesion. Interacts with DOK2, GRB2, GRB7, GRB14, PIK3R1 and PTPN11/SHP2. Colocalizes with DOK2 at contacts with the extracellular matrix in migrating cells. Post-translationally, proteolytic processing leads to the shedding of the extracellular domain (soluble TIE-2 alias sTIE-2). Autophosphorylated on tyrosine residues in response to ligand binding. Autophosphorylation occurs in trans, i.e. one subunit of the dimeric receptor phosphorylates tyrosine residues on the other subunit. Autophosphorylation occurs in a sequential manner, where Tyr-990 in the kinase activation loop is phosphorylated first, followed by autophosphorylation at Tyr-1106 and at additional tyrosine residues. ANGPT1-induced phosphorylation is impaired during hypoxia, due to increased expression of ANGPT2. Phosphorylation is important for interaction with GRB14, PIK3R1 and PTPN11. Phosphorylation at Tyr-1100 is important for interaction with GRB2 and GRB7. Phosphorylation at Tyr-1106 is important for interaction with DOK2 and for coupling to downstream signal transduction pathways in endothelial cells. Dephosphorylated by PTPRB. In terms of processing, ubiquitinated. The phosphorylated receptor is ubiquitinated and internalized, leading to its degradation. In terms of tissue distribution, specifically expressed in developing vascular endothelial cells. Abundantly expressed in lung and heart, moderately in brain, liver and kidney, and weakly in thymus, spleen and testis.

The protein localises to the cell membrane. The protein resides in the cell junction. It localises to the focal adhesion. Its subcellular location is the cytoplasm. It is found in the cytoskeleton. The protein localises to the secreted. It catalyses the reaction L-tyrosyl-[protein] + ATP = O-phospho-L-tyrosyl-[protein] + ADP + H(+). With respect to regulation, angiopoietin binding leads to receptor dimerization and activation by autophosphorylation at Tyr-990 on the kinase activation loop. Tyrosine-protein kinase that acts as a cell-surface receptor for ANGPT1, ANGPT2 and ANGPT4 and regulates angiogenesis, endothelial cell survival, proliferation, migration, adhesion and cell spreading, reorganization of the actin cytoskeleton, but also maintenance of vascular quiescence. Has anti-inflammatory effects by preventing the leakage of pro-inflammatory plasma proteins and leukocytes from blood vessels. Required for normal angiogenesis and heart development during embryogenesis. Required for postnatal hematopoiesis. After birth, activates or inhibits angiogenesis, depending on the context. Inhibits angiogenesis and promotes vascular stability in quiescent vessels, where endothelial cells have tight contacts. In quiescent vessels, ANGPT1 oligomers recruit TEK to cell-cell contacts, forming complexes with TEK molecules from adjoining cells, and this leads to preferential activation of phosphatidylinositol 3-kinase and the AKT1 signaling cascades. In migrating endothelial cells that lack cell-cell adhesions, ANGT1 recruits TEK to contacts with the extracellular matrix, leading to the formation of focal adhesion complexes, activation of PTK2/FAK and of the downstream kinases MAPK1/ERK2 and MAPK3/ERK1, and ultimately to the stimulation of sprouting angiogenesis. ANGPT1 signaling triggers receptor dimerization and autophosphorylation at specific tyrosine residues that then serve as binding sites for scaffold proteins and effectors. Signaling is modulated by ANGPT2 that has lower affinity for TEK, can promote TEK autophosphorylation in the absence of ANGPT1, but inhibits ANGPT1-mediated signaling by competing for the same binding site. Signaling is also modulated by formation of heterodimers with TIE1, and by proteolytic processing that gives rise to a soluble TEK extracellular domain. The soluble extracellular domain modulates signaling by functioning as decoy receptor for angiopoietins. TEK phosphorylates DOK2, GRB7, GRB14, PIK3R1, SHC1 and TIE1. The chain is Angiopoietin-1 receptor (Tek) from Mus musculus (Mouse).